A 177-amino-acid chain; its full sequence is Nucleoside triphosphate/diphosphate phosphatase (177 aa).

R23 (proton donor) is an active-site residue. Positions 87, 103, 105, 107, 120, and 123 each coordinate Mg(2+).

This sequence belongs to the Ntdp family. Mg(2+) is required as a cofactor.

The catalysed reaction is a ribonucleoside 5'-triphosphate + H2O = a ribonucleoside 5'-diphosphate + phosphate + H(+). It catalyses the reaction a ribonucleoside 5'-diphosphate + H2O = a ribonucleoside 5'-phosphate + phosphate + H(+). In terms of biological role, has nucleoside phosphatase activity towards nucleoside triphosphates and nucleoside diphosphates. This Streptococcus pneumoniae (strain ATCC 700669 / Spain 23F-1) protein is Nucleoside triphosphate/diphosphate phosphatase.